Reading from the N-terminus, the 338-residue chain is NAC domain-containing protein 46 (338 aa).

Residues 20–171 form the NAC domain; that stretch reads LPPGFRFHPT…EWVVCRVFHK (152 aa). Residues 118 to 177 mediate DNA binding; the sequence is VGMKKTLVFYTGRAPKGEKTNWVMHEYRLDGKYSYHNLPKTARDEWVVCRVFHKNAPSTT.

Interacts with RCD1.

The protein resides in the nucleus. In terms of biological role, transcriptional activator that acts as a positive regulator of leaf senescence. Activates NYC1, SGR1, SGR2 and PAO, which are genes involved in chlorophyll catabolic processes. Activates senescence-associated genes, such as RNS1, SAG12 and SAG13. This is NAC domain-containing protein 46 from Arabidopsis thaliana (Mouse-ear cress).